We begin with the raw amino-acid sequence, 64 residues long: Alpha-mammal toxin Lqq5 (64 aa).

An LCN-type CS-alpha/beta domain is found at 2-64; sequence KDGYIVDDKN…VSIKEKGRCN (63 aa). Cystine bridges form between Cys-12–Cys-63, Cys-16–Cys-36, Cys-22–Cys-46, and Cys-26–Cys-48. An Asparagine amide modification is found at Asn-64.

It belongs to the long (4 C-C) scorpion toxin superfamily. Sodium channel inhibitor family. Alpha subfamily. Expressed by the venom gland.

Its subcellular location is the secreted. Alpha toxins bind voltage-independently at site-3 of sodium channels (Nav) and inhibit the inactivation of the activated channels, thereby blocking neuronal transmission. Is active on mammals and bind with high affinity to rat brain synaptosome. Does not display phospholipid-binding activity. This Leiurus quinquestriatus quinquestriatus (Egyptian scorpion) protein is Alpha-mammal toxin Lqq5.